We begin with the raw amino-acid sequence, 370 residues long: Pantothenate kinase 3 (370 aa).

Glu-138 acts as the Proton acceptor in catalysis. Ser-192, Ser-195, and Arg-207 together coordinate acetyl-CoA.

The protein belongs to the type II pantothenate kinase family. Homodimer. In terms of tissue distribution, highly expressed in the liver.

The protein resides in the cytoplasm. It carries out the reaction (R)-pantothenate + ATP = (R)-4'-phosphopantothenate + ADP + H(+). The protein operates within cofactor biosynthesis; coenzyme A biosynthesis; CoA from (R)-pantothenate: step 1/5. With respect to regulation, subject to allosteric regulation, exists in two distinct conformational states, a catalytically incompetent (or open) conformation stabilized by the binding of acetyl(acyl)-CoA, and a catalytically competent (or closed) conformation stabilized by ATP-binding. Inhibited by acetyl-CoA and its thioesters which act as allosteric inhibitors and compete with the ATP-binding site. Inhibited by sulfonylureas and thiazolidinediones. Activated by oleoylethanolamide, palmitoyl-carnitine and oleoyl-carnitine. In terms of biological role, catalyzes the phosphorylation of pantothenate to generate 4'-phosphopantothenate in the first and rate-determining step of coenzyme A (CoA) synthesis. The polypeptide is Pantothenate kinase 3 (PANK3) (Homo sapiens (Human)).